A 254-amino-acid polypeptide reads, in one-letter code: MDEILERVRERVEEIRDRTFTPRAGGRSLRKALSGPGVSVIAEVKPTSPSQGRLRDVDAEDVAERARAYERGGAAGISVLTEPEFFDGRPEYVEVVREAVDVPVLRKDFIIDPVQVEESAHYGADAVLIIAAAVGREAPELIDLAHEHGMEVLLEIDRWEHLELLSECDPDVVGVNNRDLRTLEVDLNRTLELGPEVKDLTNAPLVAESGVSGPEDVVLLGEVADAVLVGTYLMRAPDPSEAVRKLVEAGRSTE.

This sequence belongs to the TrpC family.

It catalyses the reaction 1-(2-carboxyphenylamino)-1-deoxy-D-ribulose 5-phosphate + H(+) = (1S,2R)-1-C-(indol-3-yl)glycerol 3-phosphate + CO2 + H2O. Its pathway is amino-acid biosynthesis; L-tryptophan biosynthesis; L-tryptophan from chorismate: step 4/5. In Methanopyrus kandleri (strain AV19 / DSM 6324 / JCM 9639 / NBRC 100938), this protein is Indole-3-glycerol phosphate synthase.